The chain runs to 758 residues: Catalase-peroxidase (758 aa).

The span at 1–10 (MSDTQDNAPV) shows a compositional bias: polar residues. The interval 1–57 (MSDTQDNAPVSAQGVDQKAAAGCPVAHDSVTAHGSESESPAIDSPSAVGGGRPRTNR) is disordered. A cross-link (tryptophyl-tyrosyl-methioninium (Trp-Tyr) (with M-276)) is located at residues 128–250 (WHAAGTYRIH…VGATEMGLIY (123 aa)). H129 (proton acceptor) is an active-site residue. A cross-link (tryptophyl-tyrosyl-methioninium (Tyr-Met) (with W-128)) is located at residues 250–276 (YVNPEGPRGNADPASAAHFIRETFRRM). Position 291 (H291) interacts with heme b.

The protein belongs to the peroxidase family. Peroxidase/catalase subfamily. As to quaternary structure, homodimer or homotetramer. Heme b is required as a cofactor. In terms of processing, formation of the three residue Trp-Tyr-Met cross-link is important for the catalase, but not the peroxidase activity of the enzyme.

It catalyses the reaction H2O2 + AH2 = A + 2 H2O. The enzyme catalyses 2 H2O2 = O2 + 2 H2O. In terms of biological role, bifunctional enzyme with both catalase and broad-spectrum peroxidase activity. The chain is Catalase-peroxidase from Salinispora tropica (strain ATCC BAA-916 / DSM 44818 / JCM 13857 / NBRC 105044 / CNB-440).